A 176-amino-acid chain; its full sequence is Cytochrome c oxidase subunit 4 isoform 2, mitochondrial (176 aa).

The transit peptide at 1–28 (MLRLTAGRVRSLLAGRATAAFSTSSARM) directs the protein to the mitochondrion. The Mitochondrial matrix portion of the chain corresponds to 29 to 106 (ASHDLEVAES…TYSEMKQPSS (78 aa)). A helical membrane pass occupies residues 107-132 (EWKTVFGGIFIFLGFTGLVVWWQALY). Over 133 to 176 (VYPPRPRTFDDEWKAKQLKRMLDMRVNPIEGFSAKWDYEKGQWK) the chain is Mitochondrial intermembrane.

This sequence belongs to the cytochrome c oxidase IV family. In terms of assembly, component of the cytochrome c oxidase (complex IV, CIV), a multisubunit enzyme composed of 14 subunits. The complex is composed of a catalytic core of 3 subunits MT-CO1, MT-CO2 and MT-CO3, encoded in the mitochondrial DNA, and 11 supernumerary subunits COX4I, COX5A, COX5B, COX6A, COX6B, COX6C, COX7A, COX7B, COX7C, COX8 and NDUFA4, which are encoded in the nuclear genome. The complex exists as a monomer or a dimer and forms supercomplexes (SCs) in the inner mitochondrial membrane with NADH-ubiquinone oxidoreductase (complex I, CI) and ubiquinol-cytochrome c oxidoreductase (cytochrome b-c1 complex, complex III, CIII), resulting in different assemblies (supercomplex SCI(1)III(2)IV(1) and megacomplex MCI(2)III(2)IV(2)).

The protein localises to the mitochondrion inner membrane. Its pathway is energy metabolism; oxidative phosphorylation. Component of the cytochrome c oxidase, the last enzyme in the mitochondrial electron transport chain which drives oxidative phosphorylation. The respiratory chain contains 3 multisubunit complexes succinate dehydrogenase (complex II, CII), ubiquinol-cytochrome c oxidoreductase (cytochrome b-c1 complex, complex III, CIII) and cytochrome c oxidase (complex IV, CIV), that cooperate to transfer electrons derived from NADH and succinate to molecular oxygen, creating an electrochemical gradient over the inner membrane that drives transmembrane transport and the ATP synthase. Cytochrome c oxidase is the component of the respiratory chain that catalyzes the reduction of oxygen to water. Electrons originating from reduced cytochrome c in the intermembrane space (IMS) are transferred via the dinuclear copper A center (CU(A)) of subunit 2 and heme A of subunit 1 to the active site in subunit 1, a binuclear center (BNC) formed by heme A3 and copper B (CU(B)). The BNC reduces molecular oxygen to 2 water molecules using 4 electrons from cytochrome c in the IMS and 4 protons from the mitochondrial matrix. In Thunnus obesus (Bigeye tuna), this protein is Cytochrome c oxidase subunit 4 isoform 2, mitochondrial.